The following is a 193-amino-acid chain: Bifunctional protein PyrR (193 aa).

Substrate is bound by residues 57 to 58 (TR), R98, 119 to 127 (DDVLYSGRS), R152, and V176. The short motif at 115–127 (VILVDDVLYSGRS) is the PRPP-binding element.

The protein belongs to the purine/pyrimidine phosphoribosyltransferase family. PyrR subfamily.

It carries out the reaction UMP + diphosphate = 5-phospho-alpha-D-ribose 1-diphosphate + uracil. Functionally, regulates the transcription of the pyrimidine nucleotide (pyr) operon in response to exogenous pyrimidines. Its function is as follows. Also displays a weak uracil phosphoribosyltransferase activity which is not physiologically significant. The sequence is that of Bifunctional protein PyrR from Mycobacterium bovis (strain ATCC BAA-935 / AF2122/97).